The following is a 255-amino-acid chain: MVDPVAALCNYNVLEVIFSYLELDDLSHCSQVCKSWYHFLNDENSDVWRWHCLNKLPKESLKSDLLASVSTYKTKLRAYFHAWSPNDCSRNVYIKPNGFTLHRNPVAQSTDAARGKIGFRHGRHTWEVIWEGPLGTVAVIGISTKEAALQCHGYVALLGSDDQSWGWNLVENHLLHNGDMQGSYPLLNNAPKYQVGERIRVILDCEDNTLSFEKNYEFLGVAFRGLPDKKLYPTVSAVYGNTEVSMVYLGTPLDG.

One can recognise an F-box domain in the interval 3 to 51 (DPVAALCNYNVLEVIFSYLELDDLSHCSQVCKSWYHFLNDENSDVWRWH). Positions 61–253 (LKSDLLASVS…VSMVYLGTPL (193 aa)) constitute a B30.2/SPRY domain.

Belongs to the FBXO45/Fsn family. As to quaternary structure, component of an E3 ubiquitin ligase complex composed of hiw and Fsn. Interacts with Rae1, probably as part of the hiw-Fsn complex. Interacts (via B30.2/SPRY domain) with vas. Interacts with Cul1. In terms of tissue distribution, expressed in nurse cells and oocytes (at protein level). Expressed in the brain. Expressed in the neuromuscular junction (NMJ).

Its subcellular location is the cytoplasm. The protein resides in the nucleus. It localises to the synapse. It is found in the cell projection. The protein localises to the axon. Its subcellular location is the perikaryon. Its pathway is protein modification; protein ubiquitination. In terms of biological role, required in the presynaptic motoneuron to down-regulate the levels of wnd and restrain synaptic terminal growth at the neuromuscular junction (NMJ). Negatively regulates the localization of vas to the posterior pole of the oocyte. Involved in primordial germ cell formation. The sequence is that of F-box/SPRY domain-containing protein 1 (Fsn) from Drosophila melanogaster (Fruit fly).